Consider the following 454-residue polypeptide: Bifunctional protein GlmU (454 aa).

The pyrophosphorylase stretch occupies residues 1–233 (MQATPRPLAL…EAETIGINSR (233 aa)). Residues 13-16 (LAAG), Lys-27, Gln-80, 85-86 (GT), 108-110 (YGD), Gly-145, Glu-159, Asn-174, and Asn-231 contribute to the UDP-N-acetyl-alpha-D-glucosamine site. Asp-110 lines the Mg(2+) pocket. Residue Asn-231 participates in Mg(2+) binding. The tract at residues 234–254 (AELVRAEAQFQSQRRAALIEA) is linker. The segment at 255-454 (GVTMQAPDSV…KAIKDAKSKD (200 aa)) is N-acetyltransferase. UDP-N-acetyl-alpha-D-glucosamine is bound by residues Arg-320 and Lys-338. The Proton acceptor role is filled by His-350. UDP-N-acetyl-alpha-D-glucosamine is bound by residues Tyr-353 and Asn-364. Residues Ala-367, 373-374 (NY), Ser-392, Ser-410, and Arg-427 contribute to the acetyl-CoA site.

In the N-terminal section; belongs to the N-acetylglucosamine-1-phosphate uridyltransferase family. This sequence in the C-terminal section; belongs to the transferase hexapeptide repeat family. As to quaternary structure, homotrimer. It depends on Mg(2+) as a cofactor.

The protein localises to the cytoplasm. The enzyme catalyses alpha-D-glucosamine 1-phosphate + acetyl-CoA = N-acetyl-alpha-D-glucosamine 1-phosphate + CoA + H(+). It carries out the reaction N-acetyl-alpha-D-glucosamine 1-phosphate + UTP + H(+) = UDP-N-acetyl-alpha-D-glucosamine + diphosphate. It participates in nucleotide-sugar biosynthesis; UDP-N-acetyl-alpha-D-glucosamine biosynthesis; N-acetyl-alpha-D-glucosamine 1-phosphate from alpha-D-glucosamine 6-phosphate (route II): step 2/2. Its pathway is nucleotide-sugar biosynthesis; UDP-N-acetyl-alpha-D-glucosamine biosynthesis; UDP-N-acetyl-alpha-D-glucosamine from N-acetyl-alpha-D-glucosamine 1-phosphate: step 1/1. It functions in the pathway bacterial outer membrane biogenesis; LPS lipid A biosynthesis. In terms of biological role, catalyzes the last two sequential reactions in the de novo biosynthetic pathway for UDP-N-acetylglucosamine (UDP-GlcNAc). The C-terminal domain catalyzes the transfer of acetyl group from acetyl coenzyme A to glucosamine-1-phosphate (GlcN-1-P) to produce N-acetylglucosamine-1-phosphate (GlcNAc-1-P), which is converted into UDP-GlcNAc by the transfer of uridine 5-monophosphate (from uridine 5-triphosphate), a reaction catalyzed by the N-terminal domain. This Jannaschia sp. (strain CCS1) protein is Bifunctional protein GlmU.